We begin with the raw amino-acid sequence, 807 residues long: Glycerol-3-phosphate acyltransferase (807 aa).

The short motif at 305–310 is the HXXXXD motif element; the sequence is CHRSHM.

The protein belongs to the GPAT/DAPAT family.

The protein resides in the cell inner membrane. The enzyme catalyses sn-glycerol 3-phosphate + an acyl-CoA = a 1-acyl-sn-glycero-3-phosphate + CoA. The protein operates within phospholipid metabolism; CDP-diacylglycerol biosynthesis; CDP-diacylglycerol from sn-glycerol 3-phosphate: step 1/3. In Aliivibrio salmonicida (strain LFI1238) (Vibrio salmonicida (strain LFI1238)), this protein is Glycerol-3-phosphate acyltransferase.